A 334-amino-acid chain; its full sequence is UPF0104 membrane protein MTH_378 (334 aa).

A run of 8 helical transmembrane segments spans residues 7–27 (FYFFALSILLILALIIWMGPS), 33–53 (VYMADWMIIAIALLIHMGVLA), 120–140 (FFDLGIGGGLLLLAAVMVPVI), 142–162 (VIALFGAILSVLITYLIYLVN), 218–238 (VIFILSLLSWLMECLRLYLVF), 247–267 (FSAVIIIFLLANLVGILSALP), 277–297 (MAGLFVVFGVPGFLAGSIALV), and 300–320 (IISFWMVTALGAIFSSCYAGE).

The protein belongs to the UPF0104 family.

The protein resides in the cell membrane. The polypeptide is UPF0104 membrane protein MTH_378 (Methanothermobacter thermautotrophicus (strain ATCC 29096 / DSM 1053 / JCM 10044 / NBRC 100330 / Delta H) (Methanobacterium thermoautotrophicum)).